We begin with the raw amino-acid sequence, 189 residues long: Peptidyl-tRNA hydrolase (189 aa).

Tyr-15 serves as a coordination point for tRNA. The active-site Proton acceptor is the His-20. 3 residues coordinate tRNA: Phe-66, Asn-68, and Asn-114.

The protein belongs to the PTH family. As to quaternary structure, monomer.

The protein localises to the cytoplasm. The catalysed reaction is an N-acyl-L-alpha-aminoacyl-tRNA + H2O = an N-acyl-L-amino acid + a tRNA + H(+). In terms of biological role, hydrolyzes ribosome-free peptidyl-tRNAs (with 1 or more amino acids incorporated), which drop off the ribosome during protein synthesis, or as a result of ribosome stalling. Functionally, catalyzes the release of premature peptidyl moieties from peptidyl-tRNA molecules trapped in stalled 50S ribosomal subunits, and thus maintains levels of free tRNAs and 50S ribosomes. This is Peptidyl-tRNA hydrolase from Streptococcus pyogenes serotype M3 (strain ATCC BAA-595 / MGAS315).